We begin with the raw amino-acid sequence, 487 residues long: 3-octaprenyl-4-hydroxybenzoate carboxy-lyase (487 aa).

N172 provides a ligand contact to Mn(2+). Prenylated FMN is bound by residues 175-177, 189-191, and 194-195; these read IYR, RWL, and RG. E238 contacts Mn(2+). Residue D287 is the Proton donor of the active site.

Belongs to the UbiD family. As to quaternary structure, homohexamer. The cofactor is prenylated FMN. Requires Mn(2+) as cofactor.

It localises to the cell membrane. It carries out the reaction a 4-hydroxy-3-(all-trans-polyprenyl)benzoate + H(+) = a 2-(all-trans-polyprenyl)phenol + CO2. Its pathway is cofactor biosynthesis; ubiquinone biosynthesis. Its function is as follows. Catalyzes the decarboxylation of 3-octaprenyl-4-hydroxy benzoate to 2-octaprenylphenol, an intermediate step in ubiquinone biosynthesis. In Actinobacillus pleuropneumoniae serotype 3 (strain JL03), this protein is 3-octaprenyl-4-hydroxybenzoate carboxy-lyase.